The chain runs to 210 residues: ATP-dependent Clp protease proteolytic subunit (210 aa).

Catalysis depends on Ser-106, which acts as the Nucleophile. His-131 is a catalytic residue.

It belongs to the peptidase S14 family. Fourteen ClpP subunits assemble into 2 heptameric rings which stack back to back to give a disk-like structure with a central cavity, resembling the structure of eukaryotic proteasomes.

It is found in the cytoplasm. It carries out the reaction Hydrolysis of proteins to small peptides in the presence of ATP and magnesium. alpha-casein is the usual test substrate. In the absence of ATP, only oligopeptides shorter than five residues are hydrolyzed (such as succinyl-Leu-Tyr-|-NHMec, and Leu-Tyr-Leu-|-Tyr-Trp, in which cleavage of the -Tyr-|-Leu- and -Tyr-|-Trp bonds also occurs).. Functionally, cleaves peptides in various proteins in a process that requires ATP hydrolysis. Has a chymotrypsin-like activity. Plays a major role in the degradation of misfolded proteins. The sequence is that of ATP-dependent Clp protease proteolytic subunit from Bradyrhizobium sp. (strain BTAi1 / ATCC BAA-1182).